Here is a 263-residue protein sequence, read N- to C-terminus: Single-stranded DNA-binding protein WHY1, chloroplastic (263 aa).

Residues M1–K47 constitute a chloroplast transit peptide. The required for ssDNA binding stretch occupies residues K89 to L94. Positions K167–K180 match the Nuclear localization signal motif.

It belongs to the Whirly family. As to quaternary structure, homotetramer.

The protein resides in the plastid. The protein localises to the chloroplast. It localises to the nucleus. Its function is as follows. Single-stranded DNA-binding protein that functions in both chloroplasts and nucleus. In chloroplasts, maintains plastid genome stability by preventing break-induced and short homology-dependent illegitimate recombinations. In nucleus, modulates telomere length homeostasis by inhibiting the action of the telomerase at the extreme termini of chromosomes. Is recruited to a distal element upstream of the kinesin KP1 to mediate the transcriptional repression of KP1. Is required for full salicylic acid-dependent plant disease resistance responses. Can bind double-stranded DNA in vivo. This chain is Single-stranded DNA-binding protein WHY1, chloroplastic (WHY1), found in Arabidopsis thaliana (Mouse-ear cress).